A 374-amino-acid chain; its full sequence is Tuliposide A-converting enzyme b3, amyloplastic (374 aa).

The N-terminal 68 residues, 1-68 (MSAALFCGPP…TNSSLSPSPT (68 aa)), are a transit peptide targeting the amyloplast. Serine 226 functions as the Acyl-ester intermediate in the catalytic mechanism. Active-site charge relay system residues include aspartate 316 and histidine 348.

Belongs to the AB hydrolase superfamily. As to quaternary structure, homodimer. Highly expressed in pistil and bulb scales. Lower expression in stem, and barely detected in root, leaf, petal and stamen.

Its subcellular location is the plastid. It is found in the amyloplast. The catalysed reaction is 6-tuliposide A = tulipalin A + D-glucose. In terms of biological role, lactone-forming carboxylesterases, specifically catalyzing intramolecular transesterification, but not hydrolysis. Involved in the biosynthesis of tulipalins, defensive chemicals that show antimicrobial activities against a broad range of strains of bacteria and fungi. Substrates are 6-tuliposide A &gt; 6-tuliposide B. The protein is Tuliposide A-converting enzyme b3, amyloplastic (TCEA-B3) of Tulipa gesneriana (Garden tulip).